The chain runs to 108 residues: Translation initiation factor 1A (108 aa).

Residues I10–T84 enclose the S1-like domain.

The protein belongs to the eIF-1A family.

In terms of biological role, seems to be required for maximal rate of protein biosynthesis. Enhances ribosome dissociation into subunits and stabilizes the binding of the initiator Met-tRNA(I) to 40 S ribosomal subunits. This Picrophilus torridus (strain ATCC 700027 / DSM 9790 / JCM 10055 / NBRC 100828 / KAW 2/3) protein is Translation initiation factor 1A.